Here is a 239-residue protein sequence, read N- to C-terminus: Calcium load-activated calcium channel (239 aa).

Over 1 to 55 (MPRKRKCDLRAVRVGLLLGGGGVYGSRFRFTFPGCRALSPWRVRVQRRRCEMSTM) the chain is Lumenal. A helical transmembrane segment spans residues 56 to 83 (FADTLLIVFISVCTALLAEGITWVLVYR). A coiled-coil region spans residues 83–140 (RTDKYKRLKAEVEKQSKKLEKKKETITESAGRQQKKKIERQEEKLKNNNRDLSMVRMK). Residues 84-137 (TDKYKRLKAEVEKQSKKLEKKKETITESAGRQQKKKIERQEEKLKNNNRDLSMV) are Cytoplasmic-facing. Ser111 is modified (phosphoserine). The chain crosses the membrane as a helical span at residues 138–157 (RMKSMFAIGFCFTALMGMFN). Residues 158 to 171 (SIFDGRVVAKLPFT) lie on the Lumenal side of the membrane. The stretch at 172-181 (PLSYIQGLSH) is an intramembrane region. Residues 182 to 191 (RNLLGDDTTD) are Lumenal-facing. The helical transmembrane segment at 192-213 (CSFIFLYILCTMSIRQNIQKIL) threads the bilayer. At 214–239 (GLAPSRAATKQAGGFLGPPPPSGKFS) the chain is on the cytoplasmic side. Phosphoserine is present on Ser239.

The protein belongs to the TMCO1 family. Homodimer and homotetramer. Homodimer under resting conditions; forms homotetramers following ER calcium overload. Component of the GET- and EMC-like (GEL) complex, composed of RAB5IF/OPTI and TMCO1. The GEL complex is part of the multi-pass translocon (MPT) complex, composed of three subcomplexes, the GEL complex (composed of RAB5IF/OPTI and TMCO1), the BOS complex (composed of NCLN/Nicalin, NOMO and TMEM147) and the PAT complex (composed of WDR83OS/Asterix and CCDC47). The MPT complex associates with the SEC61 complex. Widely expressed in adult and fetal tissues, with higher levels in thymus, prostate, testis and small intestine and lower levels in brain, placenta, lung and kidney. Present in most tissues in the eye, including the trabecular meshwork and retina (at protein level).

The protein resides in the endoplasmic reticulum membrane. It localises to the golgi apparatus membrane. The protein localises to the mitochondrion membrane. The enzyme catalyses Ca(2+)(in) = Ca(2+)(out). Functionally, endoplasmic reticulum (ER) calcium-selective channel preventing intracellular Ca2(+) stores from overfilling and maintaining calcium homeostasis in the ER. In response to endoplasmic reticulum (ER) Ca2(+) overloading, assembles into a homotetramer, forming a functional calcium-selective channel facilitating Ca2(+) release. Mediates ER Ca2(+) homeostasis in osteoblasts and plays a key role in bone formation, via the CaMKII-HDAC4-RUNX2 signaling axis. Component of the multi-pass translocon (MPT) complex that mediates insertion of multi-pass membrane proteins into the lipid bilayer of membranes. The MPT complex takes over after the SEC61 complex: following membrane insertion of the first few transmembrane segments of proteins by the SEC61 complex, the MPT complex occludes the lateral gate of the SEC61 complex to promote insertion of subsequent transmembrane regions. Within the MPT complex, the GEL subcomplex may mediate insertion of transmembrane regions into the membrane. In Homo sapiens (Human), this protein is Calcium load-activated calcium channel.